We begin with the raw amino-acid sequence, 289 residues long: MEAEHTSTKGVPEAGEFLLLDKPLDWTSFDVVAKIRNTYKRGGLKRKVGHSGTLDPKATGLLILATGRKTKEIASLEGLDKEYLAVIKLGARTASHDVETPETDHTPAGHITLAMVRAAALAFVGPRLQQPPMHSASWHEGKRLYALARKGEEVKERKAKEIVIHQFEVTHMQGPLVYCRLLVSKGSYIRVIADELGMALGVGAYLAGLRRTAVGPYRVEDAMSVEDARARILSQIAVDEQQPGGVLAQHEREGSRALDSAAGNAEHDREEARIADNNREDRSRQHADR.

Asp-55 acts as the Nucleophile in catalysis. Residues 243–289 are disordered; the sequence is PGGVLAQHEREGSRALDSAAGNAEHDREEARIADNNREDRSRQHADR. Residues 265–289 are compositionally biased toward basic and acidic residues; it reads AEHDREEARIADNNREDRSRQHADR.

The protein belongs to the pseudouridine synthase TruB family. Type 1 subfamily.

It carries out the reaction uridine(55) in tRNA = pseudouridine(55) in tRNA. Its function is as follows. Responsible for synthesis of pseudouridine from uracil-55 in the psi GC loop of transfer RNAs. The polypeptide is tRNA pseudouridine synthase B (Chlorobium luteolum (strain DSM 273 / BCRC 81028 / 2530) (Pelodictyon luteolum)).